Reading from the N-terminus, the 147-residue chain is Hemoglobin subunit beta (147 aa).

Valine 2 is modified (N-acetylvaline). The 145-residue stretch at 3–147 folds into the Globin domain; that stretch reads HLTPEEKNAV…VANALAHKYH (145 aa). Position 13 is a phosphothreonine (threonine 13). Position 45 is a phosphoserine (serine 45). Lysine 60 bears the N6-acetyllysine mark. Position 64 (histidine 64) interacts with heme b. At lysine 83 the chain carries N6-acetyllysine. Residue histidine 93 participates in heme b binding. Cysteine 94 bears the S-nitrosocysteine mark. Position 145 is an N6-acetyllysine (lysine 145).

The protein belongs to the globin family. Heterotetramer of two alpha chains and two beta chains. In terms of tissue distribution, red blood cells.

Involved in oxygen transport from the lung to the various peripheral tissues. This is Hemoglobin subunit beta (HBB) from Papio anubis (Olive baboon).